The following is a 534-amino-acid chain: Serine/threonine-protein kinase NLK (534 aa).

Sufficient for interaction with DAPK3 regions lie at residues 8 to 132 (LVSC…KAHH) and 131 to 423 (HHHQ…SKRI). Required for interaction with TAB2 stretches follow at residues 8–311 (LVSC…VVTQ) and 441–534 (YHTC…LVWE). Disordered stretches follow at residues 29-79 (AAAA…SSAA) and 97-147 (QQPY…DIEP). Residues 33 to 61 (GHHHHHHHHLPHLPPPHLHHHHHPQHHLH) are compositionally biased toward basic residues. The span at 110–126 (PGPAAAAPAQVQAAAAA) shows a compositional bias: low complexity. Basic residues predominate over residues 129–138 (KAHHHQHSHH). One can recognise a Protein kinase domain in the interval 145–434 (IEPDRPIGYG…AKDALAHPYL (290 aa)). Residues 151–159 (IGYGAFGVV) and lysine 174 each bind ATP. Catalysis depends on aspartate 271, which acts as the Proton acceptor. Phosphothreonine; by autocatalysis is present on threonine 305. Residues 305–307 (TQE) carry the TQE motif. The tract at residues 435 to 534 (DEGRLRYHTC…EMPPSPLVWE (100 aa)) is required for homodimerization and kinase activation and localization to the nucleus. Position 529 is a phosphoserine (serine 529).

Belongs to the protein kinase superfamily. CMGC Ser/Thr protein kinase family. MAP kinase subfamily. In terms of assembly, homodimer. Homodimerization is required for intermolecular autophosphorylation, kinase activation and nuclear localization. May interact with components of cullin-RING-based SCF (SKP1-CUL1-F-box protein) E3 ubiquitin-protein ligase complexes. Interacts with LEF1, MEF2A, MYBL1 and MYBL2. Interacts with the upstream activating kinases HIPK2 and MAP3K7/TAK1. Interaction with MAP3K7/TAK1 seems to be indirect, and may be mediated by other proteins such as STAT3, TAB1 and TAB2. Interacts with and phosphorylates a number of transcription factors including FOXO1, FOXO3, FOXO4, MYB, NOTCH1 and TCF7L2/TCF4. Interacts with DAPK3/ZIPK, and this interaction may disrupt interaction with transcription factors such as TCF7L2/TCF4. Forms a transcriptional repressor complex with CHD7, PPARG and SETDB1. Interacts with RNF138/NARF. Interacts with ATF5; the interaction stabilizes ATF5 at the protein level in a kinase-independent manner. Mg(2+) serves as cofactor. Phosphorylated on Thr-305. Intermolecular autophosphorylation on Thr-305 activates the enzyme.

It localises to the nucleus. It is found in the cytoplasm. It catalyses the reaction L-seryl-[protein] + ATP = O-phospho-L-seryl-[protein] + ADP + H(+). The enzyme catalyses L-threonyl-[protein] + ATP = O-phospho-L-threonyl-[protein] + ADP + H(+). Its activity is regulated as follows. Activated by the non-canonical Wnt signaling pathway, in which WNT5A leads to activation of MAP3K7/TAK1 and HIPK2, which subsequently phosphorylates and activates this protein. Activated by dimerization and subsequent intermolecular autophosphorylation on Thr-305. Other cytokines such as IL6 may also activate this regulatory circuit. Functionally, serine/threonine-protein kinase that regulates a number of transcription factors with key roles in cell fate determination. Positive effector of the non-canonical Wnt signaling pathway, acting downstream of WNT5A, MAP3K7/TAK1 and HIPK2. Negative regulator of the canonical Wnt/beta-catenin signaling pathway. Binds to and phosphorylates TCF7L2/TCF4 and LEF1, promoting the dissociation of the TCF7L2/LEF1/beta-catenin complex from DNA, as well as the ubiquitination and subsequent proteolysis of LEF1. Together these effects inhibit the transcriptional activation of canonical Wnt/beta-catenin target genes. Negative regulator of the Notch signaling pathway. Binds to and phosphorylates NOTCH1, thereby preventing the formation of a transcriptionally active ternary complex of NOTCH1, RBPJ/RBPSUH and MAML1. Negative regulator of the MYB family of transcription factors. Phosphorylation of MYB leads to its subsequent proteolysis while phosphorylation of MYBL1 and MYBL2 inhibits their interaction with the coactivator CREBBP. Other transcription factors may also be inhibited by direct phosphorylation of CREBBP itself. Acts downstream of IL6 and MAP3K7/TAK1 to phosphorylate STAT3, which is in turn required for activation of NLK by MAP3K7/TAK1. Upon IL1B stimulus, cooperates with ATF5 to activate the transactivation activity of C/EBP subfamily members. Phosphorylates ATF5 but also stabilizes ATF5 protein levels in a kinase-independent manner. Acts as an inhibitor of the mTORC1 complex in response to osmotic stress by mediating phosphorylation of RPTOR, thereby preventing recruitment of the mTORC1 complex to lysosomes. This Bos taurus (Bovine) protein is Serine/threonine-protein kinase NLK (NLK).